The primary structure comprises 864 residues: Xylosyltransferase 2 (864 aa).

Residues 1–15 (MVASARVQKLVRRYK) are Cytoplasmic-facing. The chain crosses the membrane as a helical; Signal-anchor for type II membrane protein span at residues 16-36 (LAIATALAILLLQGLVVWSFS). Topologically, residues 37 to 864 (GLEEDEPGEK…GPVKADGRLR (828 aa)) are lumenal. 2 disordered regions span residues 39 to 123 (EEDE…RQNL) and 136 to 158 (AGFP…DNSF). The span at 53 to 65 (RPLDPGEGSKDTD) shows a compositional bias: basic and acidic residues. Positions 73 to 82 (SAGRRHGRWR) are enriched in basic residues. N-linked (GlcNAc...) asparagine glycosylation is present at asparagine 122. 4 disulfide bridges follow: cysteine 162–cysteine 190, cysteine 206–cysteine 448, cysteine 467–cysteine 480, and cysteine 469–cysteine 478. UDP-alpha-D-xylose-binding positions include valine 239, aspartate 267, and 296 to 298 (TIW). Asparagine 327 carries N-linked (GlcNAc...) asparagine glycosylation. 400-401 (DW) contacts UDP-alpha-D-xylose. UDP-alpha-D-xylose-binding positions include serine 481 and 504–505 (RK). Cystine bridges form between cysteine 580-cysteine 832 and cysteine 825-cysteine 838. Asparagine 682 carries N-linked (GlcNAc...) asparagine glycosylation.

It belongs to the glycosyltransferase 14 family. XylT subfamily. Monomer. The cofactor is Mg(2+). Mn(2+) serves as cofactor. Contains disulfide bonds.

Its subcellular location is the golgi apparatus membrane. The protein localises to the secreted. The enzyme catalyses UDP-alpha-D-xylose + L-seryl-[protein] = 3-O-(beta-D-xylosyl)-L-seryl-[protein] + UDP + H(+). It functions in the pathway glycan metabolism; chondroitin sulfate biosynthesis. The protein operates within glycan metabolism; heparan sulfate biosynthesis. Catalyzes the first step in the biosynthesis of chondroitin sulfate, heparan sulfate and dermatan sulfate proteoglycans, such as DCN. Transfers D-xylose from UDP-D-xylose to specific serine residues of the core protein. This Rattus norvegicus (Rat) protein is Xylosyltransferase 2 (Xylt2).